Reading from the N-terminus, the 255-residue chain is Small ribosomal subunit protein uS2 (255 aa).

The disordered stretch occupies residues 233-255 (DFVAEEAASEESLEELAEIVEGK).

It belongs to the universal ribosomal protein uS2 family.

This is Small ribosomal subunit protein uS2 from Lactococcus lactis subsp. cremoris (strain SK11).